The primary structure comprises 222 residues: N-(5'-phosphoribosyl)anthranilate isomerase (222 aa).

Belongs to the TrpF family.

The enzyme catalyses N-(5-phospho-beta-D-ribosyl)anthranilate = 1-(2-carboxyphenylamino)-1-deoxy-D-ribulose 5-phosphate. It participates in amino-acid biosynthesis; L-tryptophan biosynthesis; L-tryptophan from chorismate: step 3/5. The sequence is that of N-(5'-phosphoribosyl)anthranilate isomerase from Prosthecochloris aestuarii (strain DSM 271 / SK 413).